The chain runs to 429 residues: Enolase (429 aa).

Q167 contributes to the (2R)-2-phosphoglycerate binding site. E209 (proton donor) is an active-site residue. The Mg(2+) site is built by D246, E289, and D316. Positions 341, 370, 371, and 392 each coordinate (2R)-2-phosphoglycerate. The active-site Proton acceptor is K341.

Belongs to the enolase family. As to quaternary structure, component of the RNA degradosome, a multiprotein complex involved in RNA processing and mRNA degradation. Mg(2+) serves as cofactor.

It is found in the cytoplasm. Its subcellular location is the secreted. It localises to the cell surface. The catalysed reaction is (2R)-2-phosphoglycerate = phosphoenolpyruvate + H2O. Its pathway is carbohydrate degradation; glycolysis; pyruvate from D-glyceraldehyde 3-phosphate: step 4/5. Its function is as follows. Catalyzes the reversible conversion of 2-phosphoglycerate (2-PG) into phosphoenolpyruvate (PEP). It is essential for the degradation of carbohydrates via glycolysis. The chain is Enolase from Pseudomonas putida (strain ATCC 47054 / DSM 6125 / CFBP 8728 / NCIMB 11950 / KT2440).